Consider the following 752-residue polypeptide: Photosystem I P700 chlorophyll a apoprotein A1 (752 aa).

Transmembrane regions (helical) follow at residues 73–96 (IFSA…FHGA), 159–182 (LYVT…FHYH), 198–222 (MNHH…HVSL), 294–312 (RAHH…GHMY), 349–372 (WHAQ…HHMY), 388–414 (LCLF…IFMV), 436–458 (AIIS…LYIH), and 533–551 (FLVH…LILL). [4Fe-4S] cluster-binding residues include cysteine 575 and cysteine 584. The next 2 helical transmembrane spans lie at 591–612 (HVFL…HFSW) and 666–688 (LSAY…MFLF). Histidine 677 contributes to the chlorophyll a' binding site. Chlorophyll a contacts are provided by methionine 685 and tyrosine 693. Tryptophan 694 lines the phylloquinone pocket. Residues 726–746 (AVGVAHYLLGGIATTWSFFHA) traverse the membrane as a helical segment.

It belongs to the PsaA/PsaB family. The PsaA/B heterodimer binds the P700 chlorophyll special pair and subsequent electron acceptors. PSI consists of a core antenna complex that captures photons, and an electron transfer chain that converts photonic excitation into a charge separation. The eukaryotic PSI reaction center is composed of at least 11 subunits. P700 is a chlorophyll a/chlorophyll a' dimer, A0 is one or more chlorophyll a, A1 is one or both phylloquinones and FX is a shared 4Fe-4S iron-sulfur center. is required as a cofactor.

It localises to the plastid. It is found in the cyanelle thylakoid membrane. It carries out the reaction reduced [plastocyanin] + hnu + oxidized [2Fe-2S]-[ferredoxin] = oxidized [plastocyanin] + reduced [2Fe-2S]-[ferredoxin]. In terms of biological role, psaA and PsaB bind P700, the primary electron donor of photosystem I (PSI), as well as the electron acceptors A0, A1 and FX. PSI is a cytochrome c6-ferredoxin oxidoreductase, converting photonic excitation into a charge separation, which transfers an electron from the donor P700 chlorophyll pair to the spectroscopically characterized acceptors A0, A1, FX, FA and FB in turn. Oxidized P700 is reduced on the lumenal side of the thylakoid membrane by cytochrome c6. This Cyanophora paradoxa protein is Photosystem I P700 chlorophyll a apoprotein A1.